The primary structure comprises 264 residues: NAD-capped RNA hydrolase NudC (264 aa).

Arg-70 lines the substrate pocket. Residues Cys-99 and Cys-102 each coordinate Zn(2+). Substrate is bound at residue Glu-112. The Zn(2+) site is built by Cys-117 and Cys-122. Residue Tyr-127 participates in substrate binding. The Nudix hydrolase domain occupies 128–252; it reads PVICPCIIVA…TIALKLIEHT (125 aa). A divalent metal cation is bound by residues Ala-161, Glu-177, and Glu-181. A Nudix box motif is present at residues 162–183; sequence GFVEVGETFEQAVHREVLEETG. Residue 195–202 participates in substrate binding; the sequence is QPWAFPNS. An a divalent metal cation-binding site is contributed by Glu-222. A substrate-binding site is contributed by Ala-245.

It belongs to the Nudix hydrolase family. NudC subfamily. In terms of assembly, homodimer. It depends on Mg(2+) as a cofactor. Mn(2+) is required as a cofactor. Zn(2+) serves as cofactor.

The enzyme catalyses a 5'-end NAD(+)-phospho-ribonucleoside in mRNA + H2O = a 5'-end phospho-adenosine-phospho-ribonucleoside in mRNA + beta-nicotinamide D-ribonucleotide + 2 H(+). It catalyses the reaction NAD(+) + H2O = beta-nicotinamide D-ribonucleotide + AMP + 2 H(+). The catalysed reaction is NADH + H2O = reduced beta-nicotinamide D-ribonucleotide + AMP + 2 H(+). Functionally, mRNA decapping enzyme that specifically removes the nicotinamide adenine dinucleotide (NAD) cap from a subset of mRNAs by hydrolyzing the diphosphate linkage to produce nicotinamide mononucleotide (NMN) and 5' monophosphate mRNA. The NAD-cap is present at the 5'-end of some mRNAs and stabilizes RNA against 5'-processing. Has preference for mRNAs with a 5'-end purine. Catalyzes the hydrolysis of a broad range of dinucleotide pyrophosphates. In Pasteurella multocida (strain Pm70), this protein is NAD-capped RNA hydrolase NudC.